The primary structure comprises 282 residues: 2-dehydro-3-deoxyphosphooctonate aldolase (282 aa).

This sequence belongs to the KdsA family.

It is found in the cytoplasm. The enzyme catalyses D-arabinose 5-phosphate + phosphoenolpyruvate + H2O = 3-deoxy-alpha-D-manno-2-octulosonate-8-phosphate + phosphate. Its pathway is carbohydrate biosynthesis; 3-deoxy-D-manno-octulosonate biosynthesis; 3-deoxy-D-manno-octulosonate from D-ribulose 5-phosphate: step 2/3. It participates in bacterial outer membrane biogenesis; lipopolysaccharide biosynthesis. The protein is 2-dehydro-3-deoxyphosphooctonate aldolase of Chromobacterium violaceum (strain ATCC 12472 / DSM 30191 / JCM 1249 / CCUG 213 / NBRC 12614 / NCIMB 9131 / NCTC 9757 / MK).